We begin with the raw amino-acid sequence, 231 residues long: tRNA (guanine-N(1)-)-methyltransferase (231 aa).

S-adenosyl-L-methionine-binding positions include Gly-111 and 131–136 (LGNYVL).

Belongs to the RNA methyltransferase TrmD family. Homodimer.

Its subcellular location is the cytoplasm. The enzyme catalyses guanosine(37) in tRNA + S-adenosyl-L-methionine = N(1)-methylguanosine(37) in tRNA + S-adenosyl-L-homocysteine + H(+). Its function is as follows. Specifically methylates guanosine-37 in various tRNAs. The protein is tRNA (guanine-N(1)-)-methyltransferase of Leptospira interrogans serogroup Icterohaemorrhagiae serovar copenhageni (strain Fiocruz L1-130).